A 521-amino-acid polypeptide reads, in one-letter code: Caspase-10 (521 aa).

Positions 1–219 (MKSQGQHWYS…GEEELVSQTD (219 aa)) are excised as a propeptide. DED domains follow at residues 19–97 (SFRE…HLNC) and 114–187 (LFRN…NIEK). Polar residues-rich tracts occupy residues 231–248 (SWQNKHAGSNGNRATNGA) and 259–268 (ASANTLNSET). Positions 231–269 (SWQNKHAGSNGNRATNGAPSLVSRGMQGASANTLNSETS) are disordered. Catalysis depends on residues His-358 and Cys-401.

It belongs to the peptidase C14A family. Heterotetramer that consists of two anti-parallel arranged heterodimers, each one formed by a 23/17 kDa (p23/17) (depending on the splicing events) and a 12 kDa (p12) subunit. Self-associates. Interacts with FADD and CASP8. Found in a Fas signaling complex consisting of FAS, FADD, CASP8 and CASP10. Interacts with RFFL and RNF34; negatively regulate CASP10 through proteasomal degradation. Interacts with RIOK3. Post-translationally, cleavage by granzyme B and autocatalytic activity generate the two active subunits. Detectable in most tissues. Lowest expression is seen in brain, kidney, prostate, testis and colon.

It catalyses the reaction Strict requirement for Asp at position P1 and has a preferred cleavage sequence of Leu-Gln-Thr-Asp-|-Gly.. Its function is as follows. Involved in the activation cascade of caspases responsible for apoptosis execution. Recruited to both Fas- and TNFR-1 receptors in a FADD dependent manner. May participate in the granzyme B apoptotic pathways. Cleaves and activates effector caspases CASP3, CASP4, CASP6, CASP7, CASP8 and CASP9. Hydrolyzes the small- molecule substrates, Tyr-Val-Ala-Asp-|-AMC and Asp-Glu-Val-Asp-|-AMC. Isoform 7 can enhance NF-kappaB activity but promotes only slight apoptosis. In terms of biological role, isoform C is proteolytically inactive. In Homo sapiens (Human), this protein is Caspase-10 (CASP10).